The sequence spans 705 residues: Lethal(3)malignant brain tumor-like protein 2 (705 aa).

A disordered region spans residues 1–84 (MEKPRSIEET…GTPRSLDGSG (84 aa)). Ser13 is modified (phosphoserine). Over residues 15 to 25 (PMEEEEDDDLE) the composition is skewed to acidic residues. A compositionally biased stretch (low complexity) spans 38-49 (SSVGSESSSYLE). Positions 50-60 (ESSEAENEDRE) are enriched in acidic residues. Ser67 carries the phosphoserine modification. Thr76 is subject to Phosphothreonine. The segment at 81-116 (DGSGSEPAVCEMCGIVGTREAFFSKTKRFCSVSCSR) adopts an FCS-type zinc-finger fold. Residues Cys90, Cys93, Cys110, and Cys114 each coordinate Zn(2+). MBT repeat units follow at residues 179–283 (FDWG…LVPP), 291–391 (TDWK…IKMS), 397–500 (MAHH…LTPP), and 508–604 (FNWE…LQPP). At Ser338 the chain carries Phosphoserine. Residue Lys405 forms a Glycyl lysine isopeptide (Lys-Gly) (interchain with G-Cter in SUMO2) linkage. The segment at 608 to 665 (EPATPLKAKEATKKKKKQFGKKRKRIPPTKTRPLRQGSKKPLLEDDPQGARKISSEPV) is disordered. A compositionally biased stretch (basic residues) spans 619 to 634 (TKKKKKQFGKKRKRIP). Glycyl lysine isopeptide (Lys-Gly) (interchain with G-Cter in SUMO2) cross-links involve residues Lys647, Lys659, and Lys675. The disordered stretch occupies residues 680-705 (DVASPDKASSPELPVSVENIKQETDD). 3 positions are modified to phosphoserine: Ser683, Ser688, and Ser689. A Glycyl lysine isopeptide (Lys-Gly) (interchain with G-Cter in SUMO1); alternate cross-link involves residue Lys700. Lys700 is covalently cross-linked (Glycyl lysine isopeptide (Lys-Gly) (interchain with G-Cter in SUMO2); alternate).

Part of the E2F6.com-1 complex in G0 phase composed of E2F6, MGA, MAX, TFDP1, CBX3, BAT8, EUHMTASE1, RING1, RNF2, MBLR, BAT8 and YAF2.

It is found in the nucleus. Functionally, putative Polycomb group (PcG) protein. PcG proteins maintain the transcriptionally repressive state of genes, probably via a modification of chromatin, rendering it heritably changed in its expressibility. Its association with a chromatin-remodeling complex suggests that it may contribute to prevent expression of genes that trigger the cell into mitosis. Binds to monomethylated and dimethylated 'Lys-20' on histone H4. Binds histone H3 peptides that are monomethylated or dimethylated on 'Lys-4', 'Lys-9' or 'Lys-27'. The protein is Lethal(3)malignant brain tumor-like protein 2 (L3MBTL2) of Homo sapiens (Human).